The primary structure comprises 299 residues: Riboflavin transporter ImpX (299 aa).

EamA domains are found at residues lysine 6–threonine 144 and serine 162–lysine 294. 10 helical membrane-spanning segments follow: residues glycine 7 to proline 27, valine 34 to glycine 54, aspartate 68 to valine 88, valine 101 to leucine 121, tyrosine 129 to leucine 149, leucine 158 to phenylalanine 178, isoleucine 202 to glycine 222, tryptophan 224 to phenylalanine 244, valine 253 to asparagine 273, and valine 276 to serine 296.

Belongs to the EamA transporter family.

Its subcellular location is the cell membrane. Functionally, transports riboflavin into the cell. In Fusobacterium nucleatum subsp. nucleatum (strain ATCC 23726 / VPI 4351), this protein is Riboflavin transporter ImpX.